The chain runs to 340 residues: MVSSQPKYDLIREVGRGSYGVVYEAVIRKTSARVAVKKIRCHAPENVELALREFWALSSIKSQHPNVIHLEECILQKDGMVQKMSHGSNSSLYLQLVETSLKGEIAFDPRSAYYLWFVMDFCDGGDMNEYLLSRKPNRKTNTSFMLQLSSALAFLHKNQIIHRDLKPDNILISQTRLDTSDLEPTLKVADGLSKVCSASGQNPEEPVSVNKCFLSTACGTDFYMAPEVWEGHYTAKADIFALGIIIWAMLERITFIDTETKKELLGSYVKQGTEIVPVGEALLENPKMELLIPVKKKSMNGRMKQLIKEMLAANPQDRPDAFELELRLVQIAFKDSSWET.

The region spanning Tyr8–Phe333 is the Protein kinase domain. ATP-binding positions include Val14 to Val22 and Lys37. Asp164 functions as the Proton acceptor in the catalytic mechanism.

It belongs to the protein kinase superfamily. Ser/Thr protein kinase family.

The protein localises to the nucleus. The enzyme catalyses L-seryl-[protein] + ATP = O-phospho-L-seryl-[protein] + ADP + H(+). It carries out the reaction L-threonyl-[protein] + ATP = O-phospho-L-threonyl-[protein] + ADP + H(+). In Pongo abelii (Sumatran orangutan), this protein is Serine/threonine-protein kinase PDIK1L (PDIK1L).